Consider the following 167-residue polypeptide: Small ribosomal subunit protein uS3m (167 aa).

A mitochondrion-targeting transit peptide spans 1-35 (MAASVCSGLLGPRVLSWSRELPCAWRALHTSPVCA).

The protein belongs to the universal ribosomal protein uS3 family. Component of the mitochondrial small ribosomal subunit (mt-SSU). Mature mammalian 55S mitochondrial ribosomes consist of a small (28S) and a large (39S) subunit. The 28S small subunit contains a 12S ribosomal RNA (12S mt-rRNA) and 30 different proteins. The 39S large subunit contains a 16S rRNA (16S mt-rRNA), a copy of mitochondrial valine transfer RNA (mt-tRNA(Val)), which plays an integral structural role, and 52 different proteins.

It localises to the mitochondrion. The sequence is that of Small ribosomal subunit protein uS3m (MRPS24) from Homo sapiens (Human).